The primary structure comprises 103 residues: Pyrimidine/purine nucleoside phosphorylase (103 aa).

The protein belongs to the nucleoside phosphorylase PpnP family.

It catalyses the reaction a purine D-ribonucleoside + phosphate = a purine nucleobase + alpha-D-ribose 1-phosphate. The enzyme catalyses adenosine + phosphate = alpha-D-ribose 1-phosphate + adenine. The catalysed reaction is cytidine + phosphate = cytosine + alpha-D-ribose 1-phosphate. It carries out the reaction guanosine + phosphate = alpha-D-ribose 1-phosphate + guanine. It catalyses the reaction inosine + phosphate = alpha-D-ribose 1-phosphate + hypoxanthine. The enzyme catalyses thymidine + phosphate = 2-deoxy-alpha-D-ribose 1-phosphate + thymine. The catalysed reaction is uridine + phosphate = alpha-D-ribose 1-phosphate + uracil. It carries out the reaction xanthosine + phosphate = alpha-D-ribose 1-phosphate + xanthine. Its function is as follows. Catalyzes the phosphorolysis of diverse nucleosides, yielding D-ribose 1-phosphate and the respective free bases. Can use uridine, adenosine, guanosine, cytidine, thymidine, inosine and xanthosine as substrates. Also catalyzes the reverse reactions. The sequence is that of Pyrimidine/purine nucleoside phosphorylase from Sulfurimonas denitrificans (strain ATCC 33889 / DSM 1251) (Thiomicrospira denitrificans (strain ATCC 33889 / DSM 1251)).